A 227-amino-acid chain; its full sequence is MTDLSPVLTIDGPSGAGKGTVSRIVAARLGWHYLDSGALYRAVGVAASWADLDVSDPAALVRCTFDTKVEFDDAGEAGLRVLVNGADATGELRLETTGALASAIAAIPEVRSALKERQRAFRRAPGLVADGRDMGTVIFPDAAYKVFLTASAEERAGRRHKQLMEKGVPVIFDDLLREIMARDARDAQRVVAPLRPAEDAVLIDTSGMGIEDVVQRVVGLLAGRTPS.

12 to 20 is an ATP binding site; the sequence is GPSGAGKGT.

Belongs to the cytidylate kinase family. Type 1 subfamily.

The protein localises to the cytoplasm. It carries out the reaction CMP + ATP = CDP + ADP. The catalysed reaction is dCMP + ATP = dCDP + ADP. The chain is Cytidylate kinase from Xanthomonas axonopodis pv. citri (strain 306).